The chain runs to 88 residues: UPF0297 protein GK2555 (88 aa).

It belongs to the UPF0297 family.

The protein is UPF0297 protein GK2555 of Geobacillus kaustophilus (strain HTA426).